The sequence spans 224 residues: Orotate phosphoribosyltransferase (224 aa).

K29 is a binding site for 5-phospho-alpha-D-ribose 1-diphosphate. An orotate-binding site is contributed by 37-38; the sequence is FF. 5-phospho-alpha-D-ribose 1-diphosphate contacts are provided by residues 75-76, R105, K106, K109, H111, and 130-138; these read YK and DDVITAGTS. Orotate-binding residues include T134 and R162.

This sequence belongs to the purine/pyrimidine phosphoribosyltransferase family. PyrE subfamily. In terms of assembly, homodimer. Requires Mg(2+) as cofactor.

It catalyses the reaction orotidine 5'-phosphate + diphosphate = orotate + 5-phospho-alpha-D-ribose 1-diphosphate. It functions in the pathway pyrimidine metabolism; UMP biosynthesis via de novo pathway; UMP from orotate: step 1/2. Functionally, catalyzes the transfer of a ribosyl phosphate group from 5-phosphoribose 1-diphosphate to orotate, leading to the formation of orotidine monophosphate (OMP). The polypeptide is Orotate phosphoribosyltransferase (Bordetella parapertussis (strain 12822 / ATCC BAA-587 / NCTC 13253)).